The sequence spans 560 residues: DNA ligase B (560 aa).

Lys124 functions as the N6-AMP-lysine intermediate in the catalytic mechanism.

This sequence belongs to the NAD-dependent DNA ligase family. LigB subfamily.

The enzyme catalyses NAD(+) + (deoxyribonucleotide)n-3'-hydroxyl + 5'-phospho-(deoxyribonucleotide)m = (deoxyribonucleotide)n+m + AMP + beta-nicotinamide D-nucleotide.. Functionally, catalyzes the formation of phosphodiester linkages between 5'-phosphoryl and 3'-hydroxyl groups in double-stranded DNA using NAD as a coenzyme and as the energy source for the reaction. This is DNA ligase B from Escherichia coli O6:H1 (strain CFT073 / ATCC 700928 / UPEC).